The following is a 205-amino-acid chain: Small ribosomal subunit protein uS4 (205 aa).

The interval 18 to 46 (NIWGRPKSPVNRREYGPGQHGQRRKGKLS) is disordered. One can recognise an S4 RNA-binding domain in the interval 94–157 (RRLDTVVYRA…KQLAFVLEAS (64 aa)).

The protein belongs to the universal ribosomal protein uS4 family. As to quaternary structure, part of the 30S ribosomal subunit. Contacts protein S5. The interaction surface between S4 and S5 is involved in control of translational fidelity.

Its function is as follows. One of the primary rRNA binding proteins, it binds directly to 16S rRNA where it nucleates assembly of the body of the 30S subunit. In terms of biological role, with S5 and S12 plays an important role in translational accuracy. This chain is Small ribosomal subunit protein uS4, found in Rhodopseudomonas palustris (strain HaA2).